Consider the following 232-residue polypeptide: Orotidine 5'-phosphate decarboxylase (232 aa).

Residues aspartate 11, lysine 33, 61 to 70 (DMKLFDIGAT), threonine 116, arginine 179, glutamine 188, glycine 208, and arginine 209 each bind substrate. Residue lysine 63 is the Proton donor of the active site.

Belongs to the OMP decarboxylase family. Type 1 subfamily. As to quaternary structure, homodimer.

The catalysed reaction is orotidine 5'-phosphate + H(+) = UMP + CO2. The protein operates within pyrimidine metabolism; UMP biosynthesis via de novo pathway; UMP from orotate: step 2/2. Functionally, catalyzes the decarboxylation of orotidine 5'-monophosphate (OMP) to uridine 5'-monophosphate (UMP). The protein is Orotidine 5'-phosphate decarboxylase of Cereibacter sphaeroides (strain ATCC 17023 / DSM 158 / JCM 6121 / CCUG 31486 / LMG 2827 / NBRC 12203 / NCIMB 8253 / ATH 2.4.1.) (Rhodobacter sphaeroides).